Reading from the N-terminus, the 282-residue chain is NAD kinase (282 aa).

Asp-67 acts as the Proton acceptor in catalysis. Residues 67 to 68 (DG), 140 to 141 (NE), His-151, Arg-170, Asp-172, and 183 to 188 (TAYNLS) each bind NAD(+).

The protein belongs to the NAD kinase family. A divalent metal cation serves as cofactor.

The protein localises to the cytoplasm. The enzyme catalyses NAD(+) + ATP = ADP + NADP(+) + H(+). Involved in the regulation of the intracellular balance of NAD and NADP, and is a key enzyme in the biosynthesis of NADP. Catalyzes specifically the phosphorylation on 2'-hydroxyl of the adenosine moiety of NAD to yield NADP. This chain is NAD kinase, found in Halobacterium salinarum (strain ATCC 700922 / JCM 11081 / NRC-1) (Halobacterium halobium).